A 325-amino-acid polypeptide reads, in one-letter code: GPI-linked NAD(P)(+)--arginine ADP-ribosyltransferase 1 (325 aa).

A signal peptide spans 1–22 (MKIPAMMSLLLVSVGLRDGVQV). Intrachain disulfides connect C53-C272 and C169-C219. N-linked (GlcNAc...) asparagine glycosylation occurs at N65. The region spanning 73–268 (KVYADGWAQA…IYLRALGKRS (196 aa)) is the TR mART core domain. NAD(+) contacts are provided by Y117 and R174. Residues R174 and S197 contribute to the active site. Position 228 (S228) interacts with NAD(+). The active site involves E235. N-linked (GlcNAc...) asparagine glycosylation occurs at N248. The GPI-anchor amidated serine moiety is linked to residue S290. The propeptide at 291-325 (APGSISASCSLLLLLLFLVLSALPENPGLQQLTRC) is removed in mature form.

This sequence belongs to the Arg-specific ADP-ribosyltransferase family. As to expression, abundantly expressed in cardiac and skeletal muscle. Low levels also found in lung.

It is found in the sarcoplasmic reticulum membrane. It catalyses the reaction L-arginyl-[protein] + NAD(+) = N(omega)-(ADP-D-ribosyl)-L-arginyl-[protein] + nicotinamide + H(+). Functionally, has ADP-ribosyltransferase activity toward GLP1R. The chain is GPI-linked NAD(P)(+)--arginine ADP-ribosyltransferase 1 (Art1) from Mus musculus (Mouse).